A 233-amino-acid polypeptide reads, in one-letter code: NAD(P)H-hydrate epimerase (233 aa).

The region spanning 15-218 (SQQFDVELMS…KLQEKYNFIV (204 aa)) is the YjeF N-terminal domain. A (6S)-NADPHX-binding site is contributed by 67–71 (NNGGD). Residues Asn-68 and Asp-128 each coordinate K(+). (6S)-NADPHX is bound by residues 132–138 (GFSFKPP), Tyr-143, and Asp-161. Residue Ser-164 coordinates K(+).

Belongs to the NnrE/AIBP family. K(+) serves as cofactor.

It carries out the reaction (6R)-NADHX = (6S)-NADHX. It catalyses the reaction (6R)-NADPHX = (6S)-NADPHX. Functionally, catalyzes the epimerization of the S- and R-forms of NAD(P)HX, a damaged form of NAD(P)H that is a result of enzymatic or heat-dependent hydration. This is a prerequisite for the S-specific NAD(P)H-hydrate dehydratase to allow the repair of both epimers of NAD(P)HX. The polypeptide is NAD(P)H-hydrate epimerase (Paramecium tetraurelia).